The sequence spans 542 residues: Adenine deaminase (542 aa).

The protein belongs to the metallo-dependent hydrolases superfamily. Adenine deaminase family. Mn(2+) is required as a cofactor.

The enzyme catalyses adenine + H2O + H(+) = hypoxanthine + NH4(+). In Methanosphaera stadtmanae (strain ATCC 43021 / DSM 3091 / JCM 11832 / MCB-3), this protein is Adenine deaminase.